Here is a 150-residue protein sequence, read N- to C-terminus: SsrA-binding protein (150 aa).

The protein belongs to the SmpB family.

It localises to the cytoplasm. Its function is as follows. Required for rescue of stalled ribosomes mediated by trans-translation. Binds to transfer-messenger RNA (tmRNA), required for stable association of tmRNA with ribosomes. tmRNA and SmpB together mimic tRNA shape, replacing the anticodon stem-loop with SmpB. tmRNA is encoded by the ssrA gene; the 2 termini fold to resemble tRNA(Ala) and it encodes a 'tag peptide', a short internal open reading frame. During trans-translation Ala-aminoacylated tmRNA acts like a tRNA, entering the A-site of stalled ribosomes, displacing the stalled mRNA. The ribosome then switches to translate the ORF on the tmRNA; the nascent peptide is terminated with the 'tag peptide' encoded by the tmRNA and targeted for degradation. The ribosome is freed to recommence translation, which seems to be the essential function of trans-translation. This Campylobacter curvus (strain 525.92) protein is SsrA-binding protein.